The following is a 145-amino-acid chain: Arginine repressor (145 aa).

It belongs to the ArgR family.

The protein localises to the cytoplasm. It functions in the pathway amino-acid biosynthesis; L-arginine biosynthesis [regulation]. Functionally, regulates arginine biosynthesis genes. The sequence is that of Arginine repressor from Streptococcus pyogenes serotype M3 (strain ATCC BAA-595 / MGAS315).